The following is a 156-amino-acid chain: Arginine repressor (156 aa).

The protein belongs to the ArgR family.

It is found in the cytoplasm. It functions in the pathway amino-acid biosynthesis; L-arginine biosynthesis [regulation]. Its function is as follows. Regulates arginine biosynthesis genes. This Erwinia tasmaniensis (strain DSM 17950 / CFBP 7177 / CIP 109463 / NCPPB 4357 / Et1/99) protein is Arginine repressor.